Here is a 289-residue protein sequence, read N- to C-terminus: ATP synthase gamma chain (289 aa).

Belongs to the ATPase gamma chain family. F-type ATPases have 2 components, CF(1) - the catalytic core - and CF(0) - the membrane proton channel. CF(1) has five subunits: alpha(3), beta(3), gamma(1), delta(1), epsilon(1). CF(0) has three main subunits: a, b and c.

It is found in the cell inner membrane. Produces ATP from ADP in the presence of a proton gradient across the membrane. The gamma chain is believed to be important in regulating ATPase activity and the flow of protons through the CF(0) complex. The protein is ATP synthase gamma chain of Acinetobacter baylyi (strain ATCC 33305 / BD413 / ADP1).